Reading from the N-terminus, the 103-residue chain is N(4)-acetylcytidine amidohydrolase (103 aa).

In terms of domain architecture, ASCH spans 6–94; that stretch reads ITFFQRFQND…IAEIYPNQTQ (89 aa). The active-site Proton acceptor is lysine 21. The Nucleophile role is filled by threonine 24. Glutamate 74 serves as the catalytic Proton donor.

It belongs to the N(4)-acetylcytidine amidohydrolase family.

The catalysed reaction is N(4)-acetylcytidine + H2O = cytidine + acetate + H(+). It carries out the reaction N(4)-acetyl-2'-deoxycytidine + H2O = 2'-deoxycytidine + acetate + H(+). It catalyses the reaction N(4)-acetylcytosine + H2O = cytosine + acetate + H(+). In terms of biological role, catalyzes the hydrolysis of N(4)-acetylcytidine (ac4C). This Salmonella heidelberg (strain SL476) protein is N(4)-acetylcytidine amidohydrolase (yqfB).